Consider the following 396-residue polypeptide: Phosphopentomutase (396 aa).

The Mn(2+) site is built by Asp-13, Asp-288, His-293, Asp-329, His-330, and His-341.

This sequence belongs to the phosphopentomutase family. Mn(2+) serves as cofactor.

Its subcellular location is the cytoplasm. It catalyses the reaction 2-deoxy-alpha-D-ribose 1-phosphate = 2-deoxy-D-ribose 5-phosphate. The enzyme catalyses alpha-D-ribose 1-phosphate = D-ribose 5-phosphate. Its pathway is carbohydrate degradation; 2-deoxy-D-ribose 1-phosphate degradation; D-glyceraldehyde 3-phosphate and acetaldehyde from 2-deoxy-alpha-D-ribose 1-phosphate: step 1/2. Isomerase that catalyzes the conversion of deoxy-ribose 1-phosphate (dRib-1-P) and ribose 1-phosphate (Rib-1-P) to deoxy-ribose 5-phosphate (dRib-5-P) and ribose 5-phosphate (Rib-5-P), respectively. The chain is Phosphopentomutase from Clostridium beijerinckii (strain ATCC 51743 / NCIMB 8052) (Clostridium acetobutylicum).